A 58-amino-acid chain; its full sequence is Sperm protamine P1 (58 aa).

Residues 1 to 58 (MARYRRRSRSRSRSRYGRRRRRSRSRRRRSRRRRRRRGRRGRGYHRRSPHRRRRRRRR) form a disordered region.

It belongs to the protamine P1 family. In terms of tissue distribution, testis.

It is found in the nucleus. The protein resides in the chromosome. In terms of biological role, protamines substitute for histones in the chromatin of sperm during the haploid phase of spermatogenesis. They compact sperm DNA into a highly condensed, stable and inactive complex. In Monodelphis domestica (Gray short-tailed opossum), this protein is Sperm protamine P1 (PRM1).